Consider the following 137-residue polypeptide: Actin-depolymerizing factor 7 (137 aa).

At S6 the chain carries Phosphoserine. The region spanning 7–137 (GMAVEDECKL…SFDIIKSRAL (131 aa)) is the ADF-H domain.

This sequence belongs to the actin-binding proteins ADF family. Specifically expressed in pollen.

Its subcellular location is the cytoplasm. It localises to the cytoskeleton. In terms of biological role, actin-depolymerizing protein. Severs actin filaments (F-actin) and binds to actin monomers. Binds monomeric actin (G-actin) with a marked preference for the ADP-loaded form and inhibits the rate of nucleotide exchange on G-actin. Required for pollen tube growth. Promotes turnover of longitudinal actin cables by severing actin filaments in pollen tubes. The chain is Actin-depolymerizing factor 7 (ADF7) from Arabidopsis thaliana (Mouse-ear cress).